We begin with the raw amino-acid sequence, 302 residues long: uncharacterized protein (302 aa).

The active site involves Glu47.

Belongs to the PhzF family.

This is an uncharacterized protein from Mesorhizobium japonicum (strain LMG 29417 / CECT 9101 / MAFF 303099) (Mesorhizobium loti (strain MAFF 303099)).